Reading from the N-terminus, the 265-residue chain is MFQIRSFLVGISAFVMAVLGSAAYSAQPGGEYPTVDDIPVGEVRLYKIGDGVWSHIATQKLGDTVYSSNGLIVRDADELLLIDTAWGAKNTVALLAEIEKQIGLPVTRSISTHFHDDRVGGVDVLRAAGVATYTSPLTRQLAEAAGNEVPAHSLKALSSSGDVVRFGPVEVFYPGAAHSGDNLVVYVPAVRVLFGGCAVHEASRESAGNVADANLAEWPATIKRIQQRYPEAEVVIPGHGLPGGLELLQHTTNVVKTHKVRPVAE.

The signal sequence occupies residues 1 to 17 (MFQIRSFLVGISAFVMA). Zn(2+) is bound by residues His113, His115, Asp117, His178, Cys197, and His239.

The protein belongs to the metallo-beta-lactamase superfamily. Class-B beta-lactamase family. In terms of assembly, monomer. The cofactor is Zn(2+).

It localises to the periplasm. The enzyme catalyses a beta-lactam + H2O = a substituted beta-amino acid. Its function is as follows. Class B beta-lactamase which confers resistance to the beta-lactam antibiotics, including penicillins, cephalosporins and carbapenems. Acts via hydrolysis of the beta-lactam ring. Has penicillin-, cephalosporin- and carbapenem-hydrolyzing activities. This is Metallo-beta-lactamase VIM-7 from Pseudomonas aeruginosa.